A 287-amino-acid polypeptide reads, in one-letter code: tRNA selenocysteine 1-associated protein 1 (287 aa).

RRM domains follow at residues 3–86 (ASLW…YATY) and 96–175 (YSLF…VAIP).

This sequence belongs to the RRM TRSPAP family. Component of the tRNA(Sec) complex composed at least of EEFSEC, SECISBP2, SEPHS1, SEPSECS, TRNAU1AP and tRNA(Sec). Found in a complex with tRNA(Sec). Interacts with SEPSECS. Associates with mRNP and/or polysomes. Found in a complex with EEFSEC, SECISBP2, TRNAU1AP and tRNA(Sec).

It localises to the nucleus. It is found in the cytoplasm. Involved in the early steps of selenocysteine biosynthesis and tRNA(Sec) charging to the later steps resulting in the cotranslational incorporation of selenocysteine into selenoproteins. Stabilizes the SECISBP2, EEFSEC and tRNA(Sec) complex. May be involved in the methylation of tRNA(Sec). Enhances efficiency of selenoproteins synthesis. The polypeptide is tRNA selenocysteine 1-associated protein 1 (TRNAU1AP) (Homo sapiens (Human)).